We begin with the raw amino-acid sequence, 93 residues long: MIQMSSNDSSEVIRQCLQVLESITSDSSVPRNIRRSVNEIMDILNNESEPLFLRAASSISILEDISNDPNLPLHTRTLIWNLSSQLETIPVDE.

Belongs to the UPF0147 family.

The sequence is that of UPF0147 protein MM_1385 from Methanosarcina mazei (strain ATCC BAA-159 / DSM 3647 / Goe1 / Go1 / JCM 11833 / OCM 88) (Methanosarcina frisia).